The chain runs to 262 residues: Ribosome maturation factor RimP (262 aa).

The interval 197-262 (RELGVLPPPP…LGQTDPTEGD (66 aa)) is disordered. The segment covering 223 to 233 (KLPKAKLKAAK) has biased composition (basic residues). Residues 240–254 (TKEHRLAAAERKRLG) show a composition bias toward basic and acidic residues.

Belongs to the RimP family.

It is found in the cytoplasm. Its function is as follows. Required for maturation of 30S ribosomal subunits. This is Ribosome maturation factor RimP from Rhodopseudomonas palustris (strain BisB18).